A 1662-amino-acid polypeptide reads, in one-letter code: Cortactin-binding protein 2 (1662 aa).

Disordered stretches follow at residues 1–23 (MATD…AGAA), 202–235 (KKKT…EFDT), 365–439 (IGVS…LHPG), and 453–477 (GNAN…SPTS). A coiled-coil region spans residues 118 to 275 (RKMQERMSAQ…EQLKRGSDSK (158 aa)). Residues 385-395 (PSTGSTPDPTS) are compositionally biased toward low complexity. The segment covering 404–421 (AAPSTAQTPGITPQNSQA) has biased composition (polar residues). The residue at position 497 (arginine 497) is an Asymmetric dimethylarginine. Residues 498–615 (FTGPQAGAPP…SSPQLPPKPS (118 aa)) are disordered. Composition is skewed to polar residues over residues 516-529 (DVST…TSVK) and 582-592 (TVASPPSSLPQ). ANK repeat units lie at residues 708–738 (GRPT…DINY), 742–771 (DGHS…QVNA), 775–804 (NGFT…NINH), 808–837 (GGQT…DRSV), and 841–870 (DGWT…PAHG). Residues 871-897 (NSFSEEESESGVFDLDEGEESPEGKSK) form a disordered region. Acidic residues predominate over residues 874-891 (SEEESESGVFDLDEGEES). Residues 911-941 (EGWTAAHIAASKGFKNCLEILCRHGGLETER) form an ANK 6 repeat. The interval 1446–1473 (KKKGESGAWRKVNTSPRRKSGRFSLPTW) is disordered. Residue serine 1523 is modified to Phosphoserine. A disordered region spans residues 1614–1662 (VPRSKVTQCSQNTKRSSSSSNTRQIEINNNSKEENWNLHKNEHLEKPNK). Residues 1623–1637 (SQNTKRSSSSSNTRQ) show a composition bias toward low complexity. Positions 1644 to 1662 (SKEENWNLHKNEHLEKPNK) are enriched in basic and acidic residues.

In terms of assembly, interacts with CTTN/cortactin SH3 domain. Interacts with STRN, STRN4/zinedin and MOB4/phocein; this interactions mediate the association with the STRIPAK core complex and may regulate dendritic spine distribution of the STRIPAK complex in hippocampal neurons. Activation of glutamate receptors weakens the interaction with STRN and STRN4.

Its subcellular location is the cytoplasm. The protein localises to the cell cortex. It is found in the cell projection. It localises to the dendritic spine. In terms of biological role, regulates the dendritic spine distribution of CTTN/cortactin in hippocampal neurons, and thus controls dendritic spinogenesis and dendritic spine maintenance. Associates with the striatin-interacting phosphatase and kinase (STRIPAK) core complex to regulate dendritic spine distribution of the STRIPAK complex in hippocampal neurons. The sequence is that of Cortactin-binding protein 2 (CTTNBP2) from Callithrix jacchus (White-tufted-ear marmoset).